Consider the following 258-residue polypeptide: Small ribosomal subunit protein mS40 (258 aa).

The transit peptide at 1 to 35 directs the protein to the mitochondrion; it reads MAASVLNTLLRRLPMLSLFRGAHRVQVPLQTLCTK. Ser-38 and Ser-49 each carry phosphoserine. Residues 218-258 form a disordered region; the sequence is RLYQGHLREESGPPPESMPKMPPTAPAEASFTGQTDPQSAL. Positions 229–242 are enriched in pro residues; that stretch reads GPPPESMPKMPPTA. Polar residues predominate over residues 248–258; that stretch reads FTGQTDPQSAL.

The protein belongs to the bacterial ribosomal protein bS18 family. Mitochondrion-specific ribosomal protein mS40 subfamily. Component of the mitochondrial ribosome small subunit (28S) which comprises a 12S rRNA and about 30 distinct proteins.

The protein localises to the mitochondrion. The protein is Small ribosomal subunit protein mS40 (MRPS18B) of Macaca mulatta (Rhesus macaque).